The primary structure comprises 429 residues: Phosphoribosylamine--glycine ligase (429 aa).

One can recognise an ATP-grasp domain in the interval 109 to 316; the sequence is KDFLARHQIP…LVDLCLAACD (208 aa). 135-196 provides a ligand contact to ATP; that stretch reads LREKGAPIVI…EEFLDGEEAS (62 aa). Residues Glu-286 and Asn-288 each coordinate Mg(2+).

It belongs to the GARS family. As to quaternary structure, monomer. Mg(2+) is required as a cofactor. Requires Mn(2+) as cofactor.

The catalysed reaction is 5-phospho-beta-D-ribosylamine + glycine + ATP = N(1)-(5-phospho-beta-D-ribosyl)glycinamide + ADP + phosphate + H(+). It participates in purine metabolism; IMP biosynthesis via de novo pathway; N(1)-(5-phospho-D-ribosyl)glycinamide from 5-phospho-alpha-D-ribose 1-diphosphate: step 2/2. The polypeptide is Phosphoribosylamine--glycine ligase (Salmonella typhi).